Consider the following 260-residue polypeptide: Imidazole glycerol phosphate synthase subunit HisF (260 aa).

Active-site residues include Asp11 and Asp130.

The protein belongs to the HisA/HisF family. As to quaternary structure, heterodimer of HisH and HisF.

It is found in the cytoplasm. The enzyme catalyses 5-[(5-phospho-1-deoxy-D-ribulos-1-ylimino)methylamino]-1-(5-phospho-beta-D-ribosyl)imidazole-4-carboxamide + L-glutamine = D-erythro-1-(imidazol-4-yl)glycerol 3-phosphate + 5-amino-1-(5-phospho-beta-D-ribosyl)imidazole-4-carboxamide + L-glutamate + H(+). The protein operates within amino-acid biosynthesis; L-histidine biosynthesis; L-histidine from 5-phospho-alpha-D-ribose 1-diphosphate: step 5/9. Functionally, IGPS catalyzes the conversion of PRFAR and glutamine to IGP, AICAR and glutamate. The HisF subunit catalyzes the cyclization activity that produces IGP and AICAR from PRFAR using the ammonia provided by the HisH subunit. In Endomicrobium trichonymphae, this protein is Imidazole glycerol phosphate synthase subunit HisF.